A 743-amino-acid chain; its full sequence is Protein STB5 (743 aa).

A DNA-binding region (zn(2)-C6 fungal-type) is located at residues 22–49 (CARCRKLKKKCGKQIPTCANCDKNGAHC). Disordered stretches follow at residues 81–100 (VGKS…PLSA) and 155–249 (NSNP…YANN). Composition is skewed to polar residues over residues 85–99 (PLST…SPLS) and 155–198 (NSNP…SPLI). The span at 213–238 (NNNRNTSNGDNGSNVNHDNNNGSTNT) shows a compositional bias: low complexity. The segment covering 239–249 (PQLSLTPYANN) has biased composition (polar residues).

The protein localises to the nucleus. Its function is as follows. Binds to SIN3. The protein is Protein STB5 (STB5) of Saccharomyces cerevisiae (strain ATCC 204508 / S288c) (Baker's yeast).